Reading from the N-terminus, the 325-residue chain is Lipoyl synthase (325 aa).

Residues 1–32 (MPPLADASTETLSPAEQAAVRHPEKAHRPDQP) are disordered. Residues 19–32 (AVRHPEKAHRPDQP) show a composition bias toward basic and acidic residues. [4Fe-4S] cluster contacts are provided by Cys-66, Cys-71, Cys-77, Cys-92, Cys-96, Cys-99, and Ser-305. Residues 78 to 294 (WAKKHATFMI…AEVANAKGFL (217 aa)) enclose the Radical SAM core domain.

Belongs to the radical SAM superfamily. Lipoyl synthase family. [4Fe-4S] cluster is required as a cofactor.

The protein localises to the cytoplasm. The catalysed reaction is [[Fe-S] cluster scaffold protein carrying a second [4Fe-4S](2+) cluster] + N(6)-octanoyl-L-lysyl-[protein] + 2 oxidized [2Fe-2S]-[ferredoxin] + 2 S-adenosyl-L-methionine + 4 H(+) = [[Fe-S] cluster scaffold protein] + N(6)-[(R)-dihydrolipoyl]-L-lysyl-[protein] + 4 Fe(3+) + 2 hydrogen sulfide + 2 5'-deoxyadenosine + 2 L-methionine + 2 reduced [2Fe-2S]-[ferredoxin]. It functions in the pathway protein modification; protein lipoylation via endogenous pathway; protein N(6)-(lipoyl)lysine from octanoyl-[acyl-carrier-protein]: step 2/2. In terms of biological role, catalyzes the radical-mediated insertion of two sulfur atoms into the C-6 and C-8 positions of the octanoyl moiety bound to the lipoyl domains of lipoate-dependent enzymes, thereby converting the octanoylated domains into lipoylated derivatives. This chain is Lipoyl synthase, found in Beijerinckia indica subsp. indica (strain ATCC 9039 / DSM 1715 / NCIMB 8712).